A 495-amino-acid chain; its full sequence is DNA double-strand break repair helicase HerA (495 aa).

ATP is bound by residues Arg-141, 150–155 (GSGKSN), and 458–459 (KI).

It belongs to the HerA family. As to quaternary structure, forms a hexamer or a heptamer. Interacts with Mre11.

The enzyme catalyses Couples ATP hydrolysis with the unwinding of duplex DNA at the replication fork by translocating in the 5'-3' direction. This creates two antiparallel DNA single strands (ssDNA). The leading ssDNA polymer is the template for DNA polymerase III holoenzyme which synthesizes a continuous strand.. It catalyses the reaction ATP + H2O = ADP + phosphate + H(+). The catalysed reaction is Couples ATP hydrolysis with the unwinding of duplex DNA by translocating in the 3'-5' direction.. ATPase activity is slightly stimulated by either circular single- or double-stranded (ds)DNA with a weak preference for dsDNA. Helicase activity is stimulated by Mre11. Its function is as follows. Involved in DNA double-strand break (DSB) repair. Probably acts with NurA to stimulate resection of the 5' strand and produce the long 3' single-strand that is required for RadA loading. Has DNA-dependent ATPase activity and bidirectional DNA helicase activity. Loads on either a 3' or a 5' DNA tail for subsequent DNA unwinding. Can also unwind blunt-ended dsDNA, Holliday junction and splayed-arm DNA. The sequence is that of DNA double-strand break repair helicase HerA from Sulfurisphaera tokodaii (strain DSM 16993 / JCM 10545 / NBRC 100140 / 7) (Sulfolobus tokodaii).